The following is a 326-amino-acid chain: Vitamin B12 import system permease protein BtuC (326 aa).

9 consecutive transmembrane segments (helical) span residues 15–35 (WLLS…CAGE), 61–81 (LAVL…QALF), 88–108 (PGLL…VLLG), 112–132 (LPGW…TLIL), 146–166 (LLAG…AIYF), 184–204 (GGVD…LIWI), 240–260 (GWMV…GLVI), 274–294 (VLLP…DVVA), and 302–322 (ELPI…WLLL).

Belongs to the binding-protein-dependent transport system permease family. FecCD subfamily. The complex is composed of two ATP-binding proteins (BtuD), two transmembrane proteins (BtuC) and a solute-binding protein (BtuF).

The protein localises to the cell inner membrane. In terms of biological role, part of the ABC transporter complex BtuCDF involved in vitamin B12 import. Involved in the translocation of the substrate across the membrane. The polypeptide is Vitamin B12 import system permease protein BtuC (Salmonella agona (strain SL483)).